A 269-amino-acid polypeptide reads, in one-letter code: Formamidopyrimidine-DNA glycosylase (269 aa).

The Schiff-base intermediate with DNA role is filled by Pro-2. Glu-3 acts as the Proton donor in catalysis. The active-site Proton donor; for beta-elimination activity is Lys-57. Residues His-90, Arg-109, and Lys-150 each contribute to the DNA site. Residues 235 to 269 (QVYGRAGEPCRQCGHPIEIAKHGQRSTFFCRHCQH) form an FPG-type zinc finger. Arg-259 functions as the Proton donor; for delta-elimination activity in the catalytic mechanism.

This sequence belongs to the FPG family. As to quaternary structure, monomer. Zn(2+) is required as a cofactor.

The catalysed reaction is Hydrolysis of DNA containing ring-opened 7-methylguanine residues, releasing 2,6-diamino-4-hydroxy-5-(N-methyl)formamidopyrimidine.. The enzyme catalyses 2'-deoxyribonucleotide-(2'-deoxyribose 5'-phosphate)-2'-deoxyribonucleotide-DNA = a 3'-end 2'-deoxyribonucleotide-(2,3-dehydro-2,3-deoxyribose 5'-phosphate)-DNA + a 5'-end 5'-phospho-2'-deoxyribonucleoside-DNA + H(+). Involved in base excision repair of DNA damaged by oxidation or by mutagenic agents. Acts as a DNA glycosylase that recognizes and removes damaged bases. Has a preference for oxidized purines, such as 7,8-dihydro-8-oxoguanine (8-oxoG). Has AP (apurinic/apyrimidinic) lyase activity and introduces nicks in the DNA strand. Cleaves the DNA backbone by beta-delta elimination to generate a single-strand break at the site of the removed base with both 3'- and 5'-phosphates. The polypeptide is Formamidopyrimidine-DNA glycosylase (Yersinia pseudotuberculosis serotype O:1b (strain IP 31758)).